The chain runs to 406 residues: Haptoglobin (406 aa).

A signal peptide spans 1–18 (MSALGAVIALLLWGQLFA). 2 consecutive Sushi domains span residues 31-88 (DGCP…ECEA) and 90-147 (DGCP…ECEA). 5 disulfides stabilise this stretch: cysteine 52/cysteine 86, cysteine 111/cysteine 145, cysteine 149/cysteine 266, cysteine 309/cysteine 340, and cysteine 351/cysteine 381. One can recognise a Peptidase S1 domain in the interval 162-404 (ILGGHLDAKG…IQDWVQKTIA (243 aa)). An N-linked (GlcNAc...) (complex) asparagine glycan is attached at asparagine 184. Residues asparagine 207 and asparagine 211 are each glycosylated (N-linked (GlcNAc...) asparagine). A glycan (N-linked (GlcNAc...) (complex) asparagine) is linked at asparagine 241. Positions 318-323 (VPEKKT) are interaction with CD163.

Belongs to the peptidase S1 family. Tetramer of two alpha and two beta chains; disulfide-linked. The hemoglobin/haptoglobin complex is composed of a haptoglobin dimer bound to two hemoglobin alpha-beta dimers. Interacts with CD163. Interacts with ERGIC3. As to expression, expressed by the liver and secreted in plasma.

Its subcellular location is the secreted. Its function is as follows. As a result of hemolysis, hemoglobin is found to accumulate in the kidney and is secreted in the urine. Haptoglobin captures, and combines with free plasma hemoglobin to allow hepatic recycling of heme iron and to prevent kidney damage. Haptoglobin also acts as an antioxidant, has antibacterial activity, and plays a role in modulating many aspects of the acute phase response. Hemoglobin/haptoglobin complexes are rapidly cleared by the macrophage CD163 scavenger receptor expressed on the surface of liver Kupfer cells through an endocytic lysosomal degradation pathway. The uncleaved form of allele alpha-2 (2-2), known as zonulin, plays a role in intestinal permeability, allowing intercellular tight junction disassembly, and controlling the equilibrium between tolerance and immunity to non-self antigens. The sequence is that of Haptoglobin (HP) from Homo sapiens (Human).